The sequence spans 365 residues: Phospho-N-acetylmuramoyl-pentapeptide-transferase (365 aa).

The next 10 helical transmembrane spans lie at 22–42 (YVSV…LFLG), 74–94 (TMGG…WGSL), 95–115 (SSIY…IGFF), 134–154 (KFAL…YLLS), 169–189 (LHIP…INGS), 201–221 (GLAI…AYIQ), 240–260 (LAEV…FLWF), 268–288 (FMGD…AVMI), 292–312 (LIFF…MLQV), and 342–362 (KVVI…LVAI).

It belongs to the glycosyltransferase 4 family. MraY subfamily. It depends on Mg(2+) as a cofactor.

The protein resides in the cell inner membrane. It catalyses the reaction UDP-N-acetyl-alpha-D-muramoyl-L-alanyl-gamma-D-glutamyl-meso-2,6-diaminopimeloyl-D-alanyl-D-alanine + di-trans,octa-cis-undecaprenyl phosphate = di-trans,octa-cis-undecaprenyl diphospho-N-acetyl-alpha-D-muramoyl-L-alanyl-D-glutamyl-meso-2,6-diaminopimeloyl-D-alanyl-D-alanine + UMP. The protein operates within cell wall biogenesis; peptidoglycan biosynthesis. Catalyzes the initial step of the lipid cycle reactions in the biosynthesis of the cell wall peptidoglycan: transfers peptidoglycan precursor phospho-MurNAc-pentapeptide from UDP-MurNAc-pentapeptide onto the lipid carrier undecaprenyl phosphate, yielding undecaprenyl-pyrophosphoryl-MurNAc-pentapeptide, known as lipid I. In Francisella philomiragia subsp. philomiragia (strain ATCC 25017 / CCUG 19701 / FSC 153 / O#319-036), this protein is Phospho-N-acetylmuramoyl-pentapeptide-transferase.